Consider the following 326-residue polypeptide: 5,10-methylenetetrahydromethanopterin reductase (326 aa).

The protein belongs to the mer family.

Its subcellular location is the cytoplasm. The enzyme catalyses 5-methyl-5,6,7,8-tetrahydromethanopterin + oxidized coenzyme F420-(gamma-L-Glu)(n) + H(+) = 5,10-methylenetetrahydromethanopterin + reduced coenzyme F420-(gamma-L-Glu)(n). It functions in the pathway one-carbon metabolism; methanogenesis from CO(2); methyl-coenzyme M from 5,10-methylene-5,6,7,8-tetrahydromethanopterin: step 1/2. Catalyzes the reversible reduction of methylene-H(4)MPT to methyl-H(4)MPT. This chain is 5,10-methylenetetrahydromethanopterin reductase, found in Methanolobus tindarius.